The primary structure comprises 671 residues: Oviduct-specific glycoprotein (671 aa).

The first 21 residues, M1 to A21, serve as a signal peptide directing secretion. One can recognise a GH18 domain in the interval Y22–A385. A disulfide bond links C26 and C51. Residues L71 to Q72, G98 to N101, Y142, L211 to D214, and W355 contribute to the chitin site. The N-linked (GlcNAc...) asparagine glycan is linked to N402. A run of 8 repeats spans residues T490–E504, T505–E519, T520–E534, T535–E549, T550–E564, T565–E579, T580–Q594, and T595–M609. Residues T490–M609 are 8 X 15 AA tandem repeats. N-linked (GlcNAc...) asparagine glycans are attached at residues N511, N526, N541, N556, N571, and N586.

This sequence belongs to the glycosyl hydrolase 18 family. In terms of processing, highly O-glycosylated and also N-glycosylated. As to expression, oviduct.

It is found in the cytoplasmic vesicle. Its subcellular location is the secretory vesicle. Functionally, binds to oocyte zona pellucida in vivo. May play a role in the fertilization process and/or early embryonic development. Might act as a protective secretion influencing the first steps of the reproductive process necessary for the normal triggering of fertilization and early embryonic development. The chain is Oviduct-specific glycoprotein (OVGP1) from Mesocricetus auratus (Golden hamster).